Consider the following 1048-residue polypeptide: Transcription factor mef2A (1048 aa).

One can recognise an MADS-box domain in the interval 1-61 (MGRNKITIEK…NKLFQYSSRD (61 aa)). Residues 74–85 (DNTRKNLTNQDY) are compositionally biased toward polar residues. Disordered regions lie at residues 74-263 (DNTR…QAAQ), 294-339 (QQQH…QQQQ), 386-812 (GIYG…NINT), and 916-1048 (LLLT…EPKN). Residues 97–110 (DDEDGDDDGDEDLG) are compositionally biased toward acidic residues. 7 stretches are compositionally biased toward low complexity: residues 130 to 205 (NNNN…NANH), 212 to 263 (GNSA…QAAQ), 294 to 303 (QQQHQQQQQN), 327 to 339 (QQQQQMQHSQQQQ), 393 to 437 (PPQM…IMNK), 446 to 466 (YYDYNGYPQQQQPPQNYNSNG), and 481 to 500 (QQQSANPYIQQQQQPQHQSP). Residues 249–304 (NNNSNGYQQQQQAAQQAVQQAQMAQQMHLQQQQQYQQLQHIQQQQQQQHQQQQQNM) adopt a coiled-coil conformation. Positions 506-522 (YSPQQQSPVLNSQNGHH) are enriched in polar residues. Basic residues predominate over residues 529–539 (HQMHHQQHQHQ). Low complexity predominate over residues 540–593 (QHPQMQQQQQQQQQHQQHPQMQQIQQQQHPQMQQHQQHQQQHPQMQQQHMNNHQ). The segment covering 600 to 618 (NSSPEINSQKNVHSSPLIM) has biased composition (polar residues). Residues 619 to 699 (NSNNNNNNNN…NSNNGNNNNN (81 aa)) show a composition bias toward low complexity. A compositionally biased stretch (polar residues) spans 715-736 (SSPTIPEQPSINVSTSSNSAHV). Composition is skewed to low complexity over residues 738–802 (NNIT…SSST), 924–960 (SNNSNSSNNNNNNNNNNNNTNNNNISGNGSSSSSSSS), and 982–1029 (NNNN…NNSN).

It is found in the nucleus. Transcription factor that regulates cell differentiation during development. Seems to negatively regulate prestalk gene expression and positively regulate prespore gene expression. The sequence is that of Transcription factor mef2A (mef2A) from Dictyostelium discoideum (Social amoeba).